The sequence spans 216 residues: Thiopurine S-methyltransferase (216 aa).

Residues W10, L45, E66, and R123 each contribute to the S-adenosyl-L-methionine site.

It belongs to the class I-like SAM-binding methyltransferase superfamily. TPMT family.

It localises to the cytoplasm. It carries out the reaction S-adenosyl-L-methionine + a thiopurine = S-adenosyl-L-homocysteine + a thiopurine S-methylether.. The polypeptide is Thiopurine S-methyltransferase (Pseudomonas entomophila (strain L48)).